A 647-amino-acid polypeptide reads, in one-letter code: Probable potassium transport system protein Kup (647 aa).

13 helical membrane-spanning segments follow: residues 32-52 (IALMFAAIGIVFGDIGTSPLY), 74-94 (VISMVFWAFAIVVSLKYVLFV), 124-144 (LLIIMAGVFGACMFYGDAIIT), 166-186 (FVLPITVLILVILFFIQKTGT), 193-213 (FGPIMMVWFITIGLMGLHQVI), 230-250 (FLIEHSLQGFIVLGAVFLVLT), 271-291 (WFFIVMPCLLLNYFGQGAMFL), 300-320 (PFFLMVPEVFVFPLVILATAA), 322-342 (VIASQAVISGAFSMTSQAILL), 361-381 (IYMPFVNWTLLFLVIVVVLAF), 390-410 (AYGIAVTTTMIVTTLLAAIVM), 418-438 (TILVTLVIGAFLTVDLAFLTA), and 443-463 (IMEGGWFPLLLGAICFLFLMT).

The protein belongs to the HAK/KUP transporter (TC 2.A.72) family.

It is found in the cell inner membrane. The enzyme catalyses K(+)(in) + H(+)(in) = K(+)(out) + H(+)(out). Transport of potassium into the cell. Likely operates as a K(+):H(+) symporter. This Polynucleobacter asymbioticus (strain DSM 18221 / CIP 109841 / QLW-P1DMWA-1) (Polynucleobacter necessarius subsp. asymbioticus) protein is Probable potassium transport system protein Kup.